The sequence spans 281 residues: Ribosomal RNA small subunit methyltransferase I (281 aa).

This sequence belongs to the methyltransferase superfamily. RsmI family.

It is found in the cytoplasm. The enzyme catalyses cytidine(1402) in 16S rRNA + S-adenosyl-L-methionine = 2'-O-methylcytidine(1402) in 16S rRNA + S-adenosyl-L-homocysteine + H(+). Functionally, catalyzes the 2'-O-methylation of the ribose of cytidine 1402 (C1402) in 16S rRNA. This Erythrobacter litoralis (strain HTCC2594) protein is Ribosomal RNA small subunit methyltransferase I.